The sequence spans 495 residues: GTPase Der (495 aa).

The region spanning 3–178 is the EngA-type G 1 domain; the sequence is AKIALVGRPN…EMRDLLPEED (176 aa). Residues 9 to 16, 57 to 61, and 130 to 133 contribute to the GTP site; these read GRPNVGKS, DTGGI, and NKVD. Positions 190-227 are disordered; that stretch reads TAVASADADVDADVETEGGTSASETEEGITEETVEDEP. Residues 213 to 227 are compositionally biased toward acidic residues; that stretch reads ETEEGITEETVEDEP. The region spanning 231–404 is the EngA-type G 2 domain; sequence LRLCMLGRPN…LAARIRRECS (174 aa). GTP contacts are provided by residues 237 to 244, 284 to 288, and 349 to 352; these read GRPNAGKS, DTAGV, and NKMD. Residues 405–489 form the KH-like domain; the sequence is VRIPTGQLNR…PMRVHFRSSH (85 aa).

Belongs to the TRAFAC class TrmE-Era-EngA-EngB-Septin-like GTPase superfamily. EngA (Der) GTPase family. Associates with the 50S ribosomal subunit.

Functionally, GTPase that plays an essential role in the late steps of ribosome biogenesis. The protein is GTPase Der of Nitratidesulfovibrio vulgaris (strain DP4) (Desulfovibrio vulgaris).